The chain runs to 432 residues: Diaminopimelate decarboxylase (432 aa).

Lysine 66 bears the N6-(pyridoxal phosphate)lysine mark. Pyridoxal 5'-phosphate-binding positions include glycine 248 and 290–293 (EPGR). Residues arginine 293, arginine 330, and tyrosine 334 each coordinate substrate. The active-site Proton donor is the cysteine 361. Substrate-binding residues include glutamate 362 and tyrosine 390. Tyrosine 390 contributes to the pyridoxal 5'-phosphate binding site.

It belongs to the Orn/Lys/Arg decarboxylase class-II family. LysA subfamily. In terms of assembly, homodimer. The cofactor is pyridoxal 5'-phosphate.

It carries out the reaction meso-2,6-diaminopimelate + H(+) = L-lysine + CO2. The protein operates within amino-acid biosynthesis; L-lysine biosynthesis via DAP pathway; L-lysine from DL-2,6-diaminopimelate: step 1/1. Specifically catalyzes the decarboxylation of meso-diaminopimelate (meso-DAP) to L-lysine. This is Diaminopimelate decarboxylase from Bacillus methanolicus.